Reading from the N-terminus, the 1299-residue chain is DNA-directed RNA polymerase subunit beta' (1299 aa).

The Zn(2+) site is built by Cys60, Cys62, Cys75, and Cys78. Positions 385–405 are disordered; that stretch reads GRRGRPVTGPGNRPLKSLSDM. Residues Asp535, Asp537, and Asp539 each coordinate Mg(2+). Residues Cys886, Cys962, Cys969, and Cys972 each contribute to the Zn(2+) site.

It belongs to the RNA polymerase beta' chain family. As to quaternary structure, the RNAP catalytic core consists of 2 alpha, 1 beta, 1 beta' and 1 omega subunit. When a sigma factor is associated with the core the holoenzyme is formed, which can initiate transcription. The cofactor is Mg(2+). Zn(2+) serves as cofactor.

It carries out the reaction RNA(n) + a ribonucleoside 5'-triphosphate = RNA(n+1) + diphosphate. Its function is as follows. DNA-dependent RNA polymerase catalyzes the transcription of DNA into RNA using the four ribonucleoside triphosphates as substrates. The polypeptide is DNA-directed RNA polymerase subunit beta' (Streptomyces avermitilis (strain ATCC 31267 / DSM 46492 / JCM 5070 / NBRC 14893 / NCIMB 12804 / NRRL 8165 / MA-4680)).